The chain runs to 2089 residues: Non-reducing polyketide synthase PKS16 (2089 aa).

An N-terminal acylcarrier protein transacylase (SAT) domain (SAT) region spans residues 8–243 (VLFGDQTVDP…IKLPITAAFH (236 aa)). The segment at 342–364 (AGIEVSRSTEMQPRQEQRTKPRS) is disordered. The segment covering 354-364 (PRQEQRTKPRS) has biased composition (basic and acidic residues). The Ketosynthase family 3 (KS3) domain occupies 364–793 (SSDIAIIGYA…GGNTSLLIED (430 aa)). Catalysis depends on for beta-ketoacyl synthase activity residues cysteine 536, histidine 671, and histidine 710. The interval 891–1214 (VFLFTGQGSQ…SIANAYNSGV (324 aa)) is malonyl-CoA:ACP transacylase (MAT) domain. Residues 1273-1586 (TTCLQVIENE…KRTTLQSLLG (314 aa)) are product template (PT) domain. The N-terminal hotdog fold stretch occupies residues 1276-1408 (LQVIENETFT…CTVMYGDGHQ (133 aa)). One can recognise a PKS/mFAS DH domain in the interval 1276-1582 (LQVIENETFT…FQQMKRTTLQ (307 aa)). The Proton acceptor; for dehydratase activity role is filled by histidine 1309. The tract at residues 1435 to 1582 (IHRMLKEMIY…FQQMKRTTLQ (148 aa)) is C-terminal hotdog fold. Aspartate 1495 acts as the Proton donor; for dehydratase activity in catalysis. One can recognise a Carrier 1 domain in the interval 1617–1694 (QSPVAGFSKV…ELRAFFLDKM (78 aa)). Residue serine 1654 is modified to O-(pantetheine 4'-phosphoryl)serine. The interval 1697 to 1730 (PQATANDDDSDDSSDDEGPGFSRSQSNSTISTPE) is disordered. Over residues 1702–1714 (NDDDSDDSSDDEG) the composition is skewed to acidic residues. Residues 1718–1728 (SRSQSNSTIST) are compositionally biased toward polar residues. In terms of domain architecture, Carrier 2 spans 1729 to 1806 (PEEPDVVNVL…DVQKALGAAP (78 aa)). Serine 1766 bears the O-(pantetheine 4'-phosphoryl)serine mark. The segment at 1848-2083 (LFLLPDGAGS…VVGGNHFSIM (236 aa)) is thioesterase (TE) domain.

The protein operates within secondary metabolite biosynthesis. In terms of biological role, non-reducing polyketide synthase; part of the gene cluster that mediates the biosynthesis of orcinol depsidone grayanic acid (GRA), the only major secondary metabolite known in C.grayi. The first step consists in the ring and depside synthesis by PKS16 leading to 4-O-demethylsphaerophorin, involving different orcinol-like rings, one with acetyl CoA and the other with octanoyl CoA as the starter. Further depsidone formation by the GRA cluster-specific cytochrome P450 leads to 4-O-demethylgrayanic acid. Finally, the cluster specific O-methyltransferase probably converts the 4-O-demethylgrayanic acid into grayanic acid. This chain is Non-reducing polyketide synthase PKS16, found in Cladonia grayi (Gray's cup lichen).